A 411-amino-acid chain; its full sequence is Protein Brevis radix-like 2 (411 aa).

2 disordered regions span residues 10 to 31 (KDGGEGGHRSATATPNSGKSLT) and 103 to 149 (AAPS…DDDE). Over residues 20–31 (ATATPNSGKSLT) the composition is skewed to polar residues. A compositionally biased stretch (acidic residues) spans 136 to 149 (GEEDYDDDDDDDDE). The region spanning 161–217 (REWTAQVEPGVQITFVSIPGGAGNDLKRIRFSREMFNKWEAQRWWGENYDRVVELYN) is the BRX 1 domain. Disordered stretches follow at residues 245-294 (SRVG…VAAA) and 324-346 (AGPAAPYDPSRGTTSSRDEASVS). A compositionally biased stretch (low complexity) spans 276 to 294 (SRTASSKAQLSSSSSVAAA). The BRX 2 domain maps to 356–411 (TEWVEQDEPGVSITIREFGDGTRELRRVRFSRERFGEERAKVWWEQNRDRIHAQYL).

It belongs to the BRX family.

The protein localises to the nucleus. The polypeptide is Protein Brevis radix-like 2 (BRXL2) (Oryza sativa subsp. japonica (Rice)).